The chain runs to 258 residues: Acetylglutamate kinase (258 aa).

Substrate is bound by residues 44 to 45 (GG), Arg-66, and Asn-158. ATP-binding positions include 181 to 186 (DVSGIL) and 209 to 211 (IIT).

The protein belongs to the acetylglutamate kinase family. ArgB subfamily. Homodimer.

It is found in the cytoplasm. It carries out the reaction N-acetyl-L-glutamate + ATP = N-acetyl-L-glutamyl 5-phosphate + ADP. It participates in amino-acid biosynthesis; L-arginine biosynthesis; N(2)-acetyl-L-ornithine from L-glutamate: step 2/4. Its function is as follows. Catalyzes the ATP-dependent phosphorylation of N-acetyl-L-glutamate. The sequence is that of Acetylglutamate kinase from Escherichia coli O157:H7.